The primary structure comprises 1388 residues: Dicer-like protein 2 (1388 aa).

The region spanning 23–203 is the Helicase ATP-binding domain; sequence MLEASMKENI…LLTVESNLDA (181 aa). Position 36–43 (36–43) interacts with ATP; the sequence is MDTGSGKT. A DEAH box motif is present at residues 144–147; the sequence is DEAH. The region spanning 371–537 is the Helicase C-terminal domain; it reads SLLNFLDSLD…DDERQLQSVS (167 aa). A Dicer dsRNA-binding fold domain is found at 564–658; sequence AMAHLHHFCA…LPLTKRPELK (95 aa). RNase III domains follow at residues 919–1059 and 1098–1281; these read ATRL…MDGG and NERL…VDSG. Mg(2+) is bound by residues Glu1137, Asp1267, and Glu1270.

The protein belongs to the helicase family. Dicer subfamily. Mg(2+) is required as a cofactor. Mn(2+) serves as cofactor.

In terms of biological role, dicer-like endonuclease involved in cleaving double-stranded RNA in the RNA interference (RNAi) pathway. Produces 21 to 25 bp dsRNAs (siRNAs) which target the selective destruction of homologous RNAs leading to sequence-specific suppression of gene expression, called post-transcriptional gene silencing (PTGS). Part of a broad host defense response against viral infection and transposons. In Neosartorya fischeri (strain ATCC 1020 / DSM 3700 / CBS 544.65 / FGSC A1164 / JCM 1740 / NRRL 181 / WB 181) (Aspergillus fischerianus), this protein is Dicer-like protein 2 (dcl2).